We begin with the raw amino-acid sequence, 184 residues long: Ribosome-recycling factor (184 aa).

It belongs to the RRF family.

Its subcellular location is the cytoplasm. Functionally, responsible for the release of ribosomes from messenger RNA at the termination of protein biosynthesis. May increase the efficiency of translation by recycling ribosomes from one round of translation to another. The protein is Ribosome-recycling factor of Caldicellulosiruptor bescii (strain ATCC BAA-1888 / DSM 6725 / KCTC 15123 / Z-1320) (Anaerocellum thermophilum).